We begin with the raw amino-acid sequence, 126 residues long: uncharacterized protein (126 aa).

Residues 8–106 (ISVEATLEVI…WGANHINRVY (99 aa)) enclose the HTH hxlR-type domain.

This is an uncharacterized protein from Bacillus subtilis (strain 168).